The primary structure comprises 165 residues: MASGVQVADEVCRIFYDMKVRKCSTPEEIKKRKKAVIFCLSADKKCIVVEEGKEILVGDVGATITDPFKHFVGMLPEKDCRYALYDASFETKESRKEELMFFLWAPEQAPLKSKMIYASSKDAIKKKFPGIKHEYQANGPEDLNRTCIAEKLGGSLIVAFEGSPV.

Ala-2 bears the N-acetylalanine mark. Ser-3 carries the post-translational modification Phosphoserine. Residues 4–153 (GVQVADEVCR…NRTCIAEKLG (150 aa)) form the ADF-H domain. At Lys-19 the chain carries N6-acetyllysine. Residues 30–34 (KKRKK) carry the Nuclear localization signal motif.

It belongs to the actin-binding proteins ADF family. ISGylated. Widely expressed. Not found in skeletal muscle.

Its function is as follows. Actin-depolymerizing protein. Severs actin filaments (F-actin) and binds to actin monomers (G-actin). Acts in a pH-independent manner. This is Destrin (Dstn) from Mus musculus (Mouse).